A 273-amino-acid chain; its full sequence is Probable NAD(P)H dehydrogenase (quinone) FQR1-like 2 (273 aa).

The interval 1 to 60 (MGKGGGCVPSKKKKPATTGDGPGIDDDNDATNAPIQIDDDQTTIDGDRTTATNTGGTTTP) is disordered. A compositionally biased stretch (low complexity) spans 49-60 (TTATNTGGTTTP). A Flavodoxin-like domain is found at 75-263 (IFVVFYSMYG…ALAEHQGNYM (189 aa)). FMN-binding positions include 81–85 (SMYGH), 183–236 (FFVS…SPYG), and His207. Tyr83 contributes to the NAD(+) binding site.

This sequence belongs to the WrbA family. It depends on FMN as a cofactor.

It is found in the cell membrane. It catalyses the reaction a quinone + NADH + H(+) = a quinol + NAD(+). It carries out the reaction a quinone + NADPH + H(+) = a quinol + NADP(+). Functionally, catalyzes the transfer of electrons from NADH and NADPH to reduce quinone to the hydroquinone state. The protein is Probable NAD(P)H dehydrogenase (quinone) FQR1-like 2 of Arabidopsis thaliana (Mouse-ear cress).